Reading from the N-terminus, the 796-residue chain is Protein translocase subunit SecA 2 (796 aa).

ATP is bound by residues Q84, 102 to 106 (GEGKT), and D496.

It belongs to the SecA family. In terms of assembly, monomer and homodimer. Part of the essential Sec protein translocation apparatus which comprises SecA, SecYEG and auxiliary proteins SecDF. Other proteins may also be involved.

It is found in the cell membrane. It localises to the cytoplasm. The catalysed reaction is ATP + H2O + cellular proteinSide 1 = ADP + phosphate + cellular proteinSide 2.. Part of the Sec protein translocase complex. Interacts with the SecYEG preprotein conducting channel. Has a central role in coupling the hydrolysis of ATP to the transfer of proteins into and across the cell membrane, serving as an ATP-driven molecular motor driving the stepwise translocation of polypeptide chains across the membrane. The sequence is that of Protein translocase subunit SecA 2 from Staphylococcus haemolyticus (strain JCSC1435).